A 245-amino-acid polypeptide reads, in one-letter code: 8-amino-3,8-dideoxy-manno-octulosonate cytidylyltransferase (245 aa).

It belongs to the KdsB family.

The protein localises to the cytoplasm. The catalysed reaction is 8-amino-3,8-dideoxy-alpha-D-manno-octulosonate + CTP = CMP-8-amino-3,8-dideoxy-alpha-D-manno-oct-2-ulosonate + diphosphate. It functions in the pathway bacterial outer membrane biogenesis; lipopolysaccharide biosynthesis. Functionally, activates KDO8N (a required 8-carbon sugar) for incorporation into bacterial lipopolysaccharide in the Shewanella genus. The protein is 8-amino-3,8-dideoxy-manno-octulosonate cytidylyltransferase of Shewanella piezotolerans (strain WP3 / JCM 13877).